The following is a 583-amino-acid chain: Sphingomyelin phosphodiesterase A (583 aa).

The signal sequence occupies residues 1–21 (MKSIPIILLVLIGLLLASVYS). A Saposin B-type domain is found at 51-133 (IQLSCDVCQI…GYFKICSATG (83 aa)). 3 disulfides stabilise this stretch: Cys-55–Cys-129, Cys-58–Cys-123, and Cys-86–Cys-97. Residue Asn-72 is glycosylated (N-linked (GlcNAc...) asparagine). Residue Asn-182 is glycosylated (N-linked (GlcNAc...) asparagine). The Zn(2+) site is built by Asp-193 and His-195. A disulfide bond links Cys-214 and Cys-229. The Zn(2+) site is built by Asp-258 and Asn-298. Residue Asn-377 is glycosylated (N-linked (GlcNAc...) asparagine). Positions 401, 436, and 438 each coordinate Zn(2+). 4 N-linked (GlcNAc...) asparagine glycosylation sites follow: Asn-495, Asn-500, Asn-537, and Asn-547. A disulfide bridge links Cys-567 with Cys-580.

The protein belongs to the acid sphingomyelinase family. Zn(2+) serves as cofactor.

It localises to the secreted. In terms of biological role, converts sphingomyelin to ceramide. The sequence is that of Sphingomyelin phosphodiesterase A (sgmA) from Dictyostelium discoideum (Social amoeba).